Reading from the N-terminus, the 122-residue chain is Small ribosomal subunit protein uS13 (122 aa).

The disordered stretch occupies residues 97 to 122 (PVRGQRTHTNARTRKGPAKAIAGKKK).

It belongs to the universal ribosomal protein uS13 family. As to quaternary structure, part of the 30S ribosomal subunit. Forms a loose heterodimer with protein S19. Forms two bridges to the 50S subunit in the 70S ribosome.

Functionally, located at the top of the head of the 30S subunit, it contacts several helices of the 16S rRNA. In the 70S ribosome it contacts the 23S rRNA (bridge B1a) and protein L5 of the 50S subunit (bridge B1b), connecting the 2 subunits; these bridges are implicated in subunit movement. Contacts the tRNAs in the A and P-sites. This chain is Small ribosomal subunit protein uS13, found in Brucella abortus (strain S19).